We begin with the raw amino-acid sequence, 164 residues long: UPF0304 protein YfbU (164 aa).

Belongs to the UPF0304 family.

The polypeptide is UPF0304 protein YfbU (Salmonella choleraesuis (strain SC-B67)).